Reading from the N-terminus, the 1088-residue chain is MTPAERRAFERQLQQEFPGLELHAWYRQYRSLKAAHPDAILLYRLGDFYETFDDDAKLVADLLEVTLTYKEFASQKGRDQKQRCPMAGIPYHAVEGYVARLVGAGYRVAIAEQMTETPSSRTDTRPRSIFAAGIEQTALIGGHKMVERKVVRIITPGTIIESGMLPAERNNYLAALIADHGRIGLAYADLSTGEFAAIEFSGERAAQQAQGELARLNPAEILVPDRADLRLPGLEPSSARLEQDLEFLTREERERVLPGERIARRVERENHARWAHGHVTAWSEQRWDLRNARDTLLHQFGVHSLAGFGLADRPLAIRAAGAIVQYARETQQGTVANLRAIRVYTPGDAMVLDPQTQRNLELLEGNSGTTRGSLIGVLDQTRTPMGARLLRRWISQPLCDLARLRARHDAVDHFVNDAILRASVRETLRRVGDMERVVNRIIQGSGVATPRDMARLRDALRALPDLVAALEDWTPPQEDVDLSGMSALQESAALAAAPLDGITPPDDDHTEQEPTTISLRAQREARRRVSARLTGDDLFDEEEEQENAGQPAPLPTTETVRASGESARPSFEMPSLHGHGESPTLDACADILAFLETAIDDDPPALLGASNYLRAGDNGELPRRVIRPGFEPEIDRVVAASRDAQRWISELEPKERERTGIKSLRVDYNRVFGYYIEVPKTYADQVPKHYIRKQTLTTGERYFTDELKRYEEIVEQAQQRLIDLERRAFARICETLAGAGVRLLRTARTIATIDVFAALAEAAVRGRYVRPELYDDTRLRIIGGRHPVVEQTLDETFIPNDIEMDTETRQICLITGPNMSGKSTVLRQVALIALMAQIGSFVPADAAEIGVVDRIFTRIGAQDDIATGRSTFMVEMTETAALLAQSTHRSLIILDEVGRGTSTYDGMAIAQAVIEYIHNEPRLGCRTLFATHYHELTDLERTLPRLKNYHMAATEQDGRVVFLHELRPGGADRSYGIHVAELAGIPQPVIRRATELLAELERRAPRSTPQPAPERTEERPAAGRPTARSHSAARGDPPRAPDGQLSLFDLTPGPVIEMLRRLDINQLTPLEALNKLYELQKLARIGGG.

The segment at 498–579 (PLDGITPPDD…SFEMPSLHGH (82 aa)) is disordered. Over residues 537-546 (DLFDEEEEQE) the composition is skewed to acidic residues. 816 to 823 (GPNMSGKS) contributes to the ATP binding site. Residues 1000-1048 (LERRAPRSTPQPAPERTEERPAAGRPTARSHSAARGDPPRAPDGQLSLF) are disordered.

The protein belongs to the DNA mismatch repair MutS family.

This protein is involved in the repair of mismatches in DNA. It is possible that it carries out the mismatch recognition step. This protein has a weak ATPase activity. The sequence is that of DNA mismatch repair protein MutS from Roseiflexus castenholzii (strain DSM 13941 / HLO8).